The sequence spans 732 residues: Ets DNA-binding protein pokkuri (732 aa).

The PNT domain occupies 33–117 (SSQLAELKTQ…NVLQMLIIES (85 aa)). Residues 133–295 (SRYPLSPHSH…PPGTPILKDI (163 aa)) are disordered. The segment covering 141 to 157 (SHPPTPTWPPLNAPPEN) has biased composition (pro residues). Polar residues predominate over residues 176–193 (NSVTLSPPPSVDSQASSP). Residues 205-240 (GAAPGSAGGSAPAAGGATNTSNPTSSSASSTGSNGS) show a composition bias toward low complexity. Residues 396 to 479 (RLLWDFLQQL…QGERHCYQFL (84 aa)) constitute a DNA-binding region (ETS). Disordered regions lie at residues 496–548 (QSTP…NGPM), 590–647 (GPPP…TATS), and 674–732 (VAAS…HMQQ). Residues 506–539 (SPSMPQGSSQAPGSPAGQNWNPQQQSQQQQQSPQ) are compositionally biased toward low complexity. Position 543 is a phosphoserine (S543). The segment covering 637 to 647 (LSVSSKSTATS) has biased composition (polar residues). Phosphoserine occurs at positions 677, 682, and 696. A compositionally biased stretch (polar residues) spans 690-709 (AGASNASSSPRPMDQASEQA).

The protein belongs to the ETS family. Phosphorylated in response to MAPK signaling. May be phosphorylated by rl. As to expression, expressed in R7 and cone cells of the eye.

The protein resides in the nucleus. Its function is as follows. Ets-related protein that functions as a negative regulator of photoreceptor development acting antagonistically to pnt and the proneural signal mediated by RAS. It acts upstream of SINA to inhibit R7 development. In Drosophila melanogaster (Fruit fly), this protein is Ets DNA-binding protein pokkuri (aop).